The following is a 30-amino-acid chain: Urease subunit alpha (30 aa).

The protein belongs to the metallo-dependent hydrolases superfamily. Urease alpha subunit family. In terms of assembly, heterotrimer of UreA (gamma), UreB (beta) and UreC (alpha) subunits. Three heterotrimers associate to form the active enzyme. It depends on Ni cation as a cofactor.

The protein resides in the cytoplasm. The catalysed reaction is urea + 2 H2O + H(+) = hydrogencarbonate + 2 NH4(+). The protein operates within nitrogen metabolism; urea degradation; CO(2) and NH(3) from urea (urease route): step 1/1. This Escherichia coli protein is Urease subunit alpha (ureC).